Reading from the N-terminus, the 104-residue chain is MAAKIRKGDKVIVLSGRDKGRTGEVFEVRPAESRALVRGVNMVKRHQKQSQSQEGGIISKESPVHLSKIAIVGKDGKPTRVGFKIQADGTKVRVAKRSGAEIDG.

This sequence belongs to the universal ribosomal protein uL24 family. In terms of assembly, part of the 50S ribosomal subunit.

Functionally, one of two assembly initiator proteins, it binds directly to the 5'-end of the 23S rRNA, where it nucleates assembly of the 50S subunit. One of the proteins that surrounds the polypeptide exit tunnel on the outside of the subunit. This Nitrobacter hamburgensis (strain DSM 10229 / NCIMB 13809 / X14) protein is Large ribosomal subunit protein uL24.